We begin with the raw amino-acid sequence, 485 residues long: Glutamyl-tRNA(Gln) amidotransferase subunit A (485 aa).

Catalysis depends on charge relay system residues Lys78 and Ser153. The active-site Acyl-ester intermediate is Ser177.

This sequence belongs to the amidase family. GatA subfamily. In terms of assembly, heterotrimer of A, B and C subunits.

The catalysed reaction is L-glutamyl-tRNA(Gln) + L-glutamine + ATP + H2O = L-glutaminyl-tRNA(Gln) + L-glutamate + ADP + phosphate + H(+). In terms of biological role, allows the formation of correctly charged Gln-tRNA(Gln) through the transamidation of misacylated Glu-tRNA(Gln) in organisms which lack glutaminyl-tRNA synthetase. The reaction takes place in the presence of glutamine and ATP through an activated gamma-phospho-Glu-tRNA(Gln). The polypeptide is Glutamyl-tRNA(Gln) amidotransferase subunit A (Pelobacter propionicus (strain DSM 2379 / NBRC 103807 / OttBd1)).